A 529-amino-acid polypeptide reads, in one-letter code: Peptide chain release factor 3 (529 aa).

The tr-type G domain occupies 11 to 280 (AKRRTFAIIS…GLVAWAPAPM (270 aa)). Residues 20–27 (SHPDAGKT), 88–92 (DTPGH), and 142–145 (NKLD) each bind GTP.

The protein belongs to the TRAFAC class translation factor GTPase superfamily. Classic translation factor GTPase family. PrfC subfamily.

Its subcellular location is the cytoplasm. In terms of biological role, increases the formation of ribosomal termination complexes and stimulates activities of RF-1 and RF-2. It binds guanine nucleotides and has strong preference for UGA stop codons. It may interact directly with the ribosome. The stimulation of RF-1 and RF-2 is significantly reduced by GTP and GDP, but not by GMP. This Salmonella agona (strain SL483) protein is Peptide chain release factor 3.